Reading from the N-terminus, the 236-residue chain is Ribose-5-phosphate isomerase A (236 aa).

Substrate-binding positions include 31–34 (TGST), 88–91 (DGAD), and 101–104 (KGGG). Glutamate 110 serves as the catalytic Proton acceptor. Lysine 128 is a substrate binding site.

This sequence belongs to the ribose 5-phosphate isomerase family. Homodimer.

It carries out the reaction aldehydo-D-ribose 5-phosphate = D-ribulose 5-phosphate. The protein operates within carbohydrate degradation; pentose phosphate pathway; D-ribose 5-phosphate from D-ribulose 5-phosphate (non-oxidative stage): step 1/1. Functionally, catalyzes the reversible conversion of ribose-5-phosphate to ribulose 5-phosphate. In Thermosynechococcus vestitus (strain NIES-2133 / IAM M-273 / BP-1), this protein is Ribose-5-phosphate isomerase A.